A 1035-amino-acid chain; its full sequence is Kinesin-like protein KIN-4A (1035 aa).

One can recognise a Kinesin motor domain in the interval 10 to 369 (CVKVAVHVRP…LKYANRARNI (360 aa)). 89 to 96 (GQTGSGKT) contributes to the ATP binding site. Coiled-coil stretches lie at residues 380 to 437 (VADE…LRNH) and 498 to 702 (MLQD…RKSS). Disordered regions lie at residues 697–720 (EARKSSGRDNSGMNGTSPGSHMTE), 766–787 (VMSGAASPPRGKNGNSRANTLS), and 882–928 (HSES…PLSP). Polar residues-rich tracts occupy residues 704–716 (RDNSGMNGTSPGS) and 778–787 (NGNSRANTLS). The stretch at 850–904 (NVAADARCQVREKEMEIKEMKEQMTELVTILRHSESRRRETEKQLKQREQAAVTA) forms a coiled coil. Over residues 882–898 (HSESRRRETEKQLKQRE) the composition is skewed to basic and acidic residues. Over residues 902-926 (VTATTSPGNGNGSVKHSADDSNTPL) the composition is skewed to polar residues. Positions 971 to 987 (KKVSIAGQSGKLWRWKR) match the Nuclear localization signal motif. Residues 1014–1035 (DETMTRTRPRPQLLPHRPQRVM) are disordered.

The protein belongs to the TRAFAC class myosin-kinesin ATPase superfamily. Kinesin family. KIN-4 subfamily. In terms of assembly, homodimer. As to expression, expressed in young tissues with cell divisions, including initiating adventitious roots, primary root tips, flower primordia, intercalary meristems, sub-epidermal regions of young culms and panicles.

It localises to the nucleus. Its subcellular location is the cytoplasm. The protein resides in the cytoskeleton. Its activity is regulated as follows. May be regulated by cyclin-dependent kinase A. Microtubule-dependent motor protein involved in the control of the oriented deposition of cellulose microfibrils. Involved in wall biogenesis and modification, and contributes to cell-cycle progression and cell division. Acts as a transcriptional activator in gibberellic acid (GA) biosynthesis pathway. Binds specifically to the DNA sequence 5'-ACCAACTTGAA-3' of the ent-kaurene oxidase 2 (CYP701A6 or OsKO2) promoter. May regulate CYP701A6 gene expression and mediates cell elongation by regulating the GA biosynthesis pathway. The protein is Kinesin-like protein KIN-4A of Oryza sativa subsp. japonica (Rice).